Consider the following 292-residue polypeptide: Small ribosomal subunit protein uS9m (292 aa).

Residues valine 273–arginine 292 are disordered.

It belongs to the universal ribosomal protein uS9 family.

It localises to the mitochondrion. In Kluyveromyces marxianus (Yeast), this protein is Small ribosomal subunit protein uS9m (MRPS9).